Here is a 970-residue protein sequence, read N- to C-terminus: Sodium/calcium exchanger 1 (970 aa).

The N-terminal stretch at 1 to 32 (MLRLSLPPNVSMGFRLVALVALLFSHVDHITA) is a signal peptide. At 33–71 (DTEAETGGNETTECTGSYYCKKGVILPIWEPQDPSFGDK) the chain is on the extracellular side. Asparagine 41 carries N-linked (GlcNAc...) asparagine glycosylation. The helical transmembrane segment at 72-92 (IARATVYFVAMVYMFLGVSII) threads the bilayer. Over 93 to 133 (ADRFMSSIEVITSQEKEITIKKPNGETTKTTVRIWNETVSN) the chain is Cytoplasmic. A helical membrane pass occupies residues 134 to 154 (LTLMALGSSAPEILLSVIEVC). An Alpha-1 repeat occupies 138–178 (ALGSSAPEILLSVIEVCGHNFTAGDLGPSTIVGSAAFNMFI). Residues 155–167 (GHNFTAGDLGPST) are Extracellular-facing. Asparagine 157 carries N-linked (GlcNAc...) asparagine glycosylation. A helical transmembrane segment spans residues 168-188 (IVGSAAFNMFIIIALCVYVVP). Over 189–201 (DGETRKIKHLRVF) the chain is Cytoplasmic. The helical transmembrane segment at 202–222 (FVTAAWSIFAYTWLYIILSVS) threads the bilayer. Residues 223 to 228 (SPGVVE) lie on the Extracellular side of the membrane. The chain crosses the membrane as a helical span at residues 229–249 (VWEGLLTFFFFPICVVFAWVA). Topologically, residues 250-797 (DRRLLFYKYV…FVPPTEYWNG (548 aa)) are cytoplasmic. Positions 251-270 (RRLLFYKYVYKRYRAGKQRG) are putative calmodulin-binding region. Phosphoserine occurs at positions 282 and 389. Calx-beta domains follow at residues 393-493 (VNME…VHLS) and 524-624 (ATIT…IEIG). Glutamate 417, aspartate 453, aspartate 478, aspartate 479, isoleucine 481, glutamate 483, glutamate 486, aspartate 530, aspartate 531, aspartate 532, glutamate 548, aspartate 584, aspartate 610, glutamate 611, glutamate 612, and glutamate 715 together coordinate Ca(2+). Residues 798–818 (WACFIVSILMIGLLTAFIGDL) form a helical membrane-spanning segment. The Extracellular segment spans residues 819-821 (ASH). The helical transmembrane segment at 822–842 (FGCTIGLKDSVTAVVFVALGT) threads the bilayer. The Alpha-2 repeat unit spans residues 839-875 (ALGTSVPDTFASKVAATQDQYADASIGNVTGSNAVNV). Residues 843–871 (SVPDTFASKVAATQDQYADASIGNVTGSN) are Cytoplasmic-facing. A helical membrane pass occupies residues 872–892 (AVNVFLGIGVAWSIAAIYHAA). Topologically, residues 893–903 (NGEQFKVSPGT) are extracellular. A helical transmembrane segment spans residues 904 to 924 (LAFSVTLFTIFAFINVGVLLY). The Cytoplasmic segment spans residues 925–941 (RRRPEIGGELGGPRTAK). The chain crosses the membrane as a helical span at residues 942-962 (LLTSSLFVLLWLLYIFFSSLE). Residues 963–970 (AYCHIKGF) are Extracellular-facing.

Belongs to the Ca(2+):cation antiporter (CaCA) (TC 2.A.19) family. SLC8 subfamily. As to expression, detected in heart, kidney and brain (at protein level).

It is found in the cell membrane. The enzyme catalyses Ca(2+)(in) + 3 Na(+)(out) = Ca(2+)(out) + 3 Na(+)(in). Its activity is regulated as follows. Activated by micromolar levels of Ca(2+). Mediates the exchange of one Ca(2+) ion against three to four Na(+) ions across the cell membrane, and thereby contributes to the regulation of cytoplasmic Ca(2+) levels and Ca(2+)-dependent cellular processes. Contributes to Ca(2+) transport during excitation-contraction coupling in muscle. In a first phase, voltage-gated channels mediate the rapid increase of cytoplasmic Ca(2+) levels due to release of Ca(2+) stores from the endoplasmic reticulum. SLC8A1 mediates the export of Ca(2+) from the cell during the next phase, so that cytoplasmic Ca(2+) levels rapidly return to baseline. Required for normal embryonic heart development and the onset of heart contractions. The sequence is that of Sodium/calcium exchanger 1 (Slc8a1) from Mus musculus (Mouse).